Here is a 351-residue protein sequence, read N- to C-terminus: tRNA uridine(34) hydroxylase (351 aa).

The 95-residue stretch at 146–240 (DDPQALFVDM…YARRAREQGL (95 aa)) folds into the Rhodanese domain. Cys-200 acts as the Cysteine persulfide intermediate in catalysis.

It belongs to the TrhO family.

The catalysed reaction is uridine(34) in tRNA + AH2 + O2 = 5-hydroxyuridine(34) in tRNA + A + H2O. Its function is as follows. Catalyzes oxygen-dependent 5-hydroxyuridine (ho5U) modification at position 34 in tRNAs. The chain is tRNA uridine(34) hydroxylase from Sodalis glossinidius (strain morsitans).